The chain runs to 1002 residues: Probable transport protein MmpL10 (1002 aa).

Transmembrane regions (helical) follow at residues 1–21, 177–197, 199–219, 228–248, 268–288, 306–326, 358–378, 806–826, 835–855, 862–882, 901–921, and 923–943; these read MVGC…SLAE, IAVM…TMLL, LVTI…VSLV, AIVL…VFLI, AMMS…ITFL, AIGI…ILVL, YLGA…LAHF, IVAV…RAIV, VVIS…VFLG, VPGL…MLLA, VRCT…SMSG, and LFSS…GILI.

The protein belongs to the resistance-nodulation-cell division (RND) (TC 2.A.6) family. MmpL subfamily.

It is found in the cell membrane. This is Probable transport protein MmpL10 (mmpL10) from Mycobacterium bovis (strain ATCC BAA-935 / AF2122/97).